Reading from the N-terminus, the 514-residue chain is 2,3-bisphosphoglycerate-independent phosphoglycerate mutase (514 aa).

Mn(2+) is bound by residues aspartate 13 and serine 63. Catalysis depends on serine 63, which acts as the Phosphoserine intermediate. Substrate is bound by residues histidine 124, 154-155, arginine 186, arginine 192, 258-261, and lysine 332; these read RD and RADR. Mn(2+)-binding residues include aspartate 399, histidine 403, aspartate 440, histidine 441, and histidine 459.

It belongs to the BPG-independent phosphoglycerate mutase family. Monomer. It depends on Mn(2+) as a cofactor.

It carries out the reaction (2R)-2-phosphoglycerate = (2R)-3-phosphoglycerate. It functions in the pathway carbohydrate degradation; glycolysis; pyruvate from D-glyceraldehyde 3-phosphate: step 3/5. Functionally, catalyzes the interconversion of 2-phosphoglycerate and 3-phosphoglycerate. In Legionella pneumophila subsp. pneumophila (strain Philadelphia 1 / ATCC 33152 / DSM 7513), this protein is 2,3-bisphosphoglycerate-independent phosphoglycerate mutase.